We begin with the raw amino-acid sequence, 84 residues long: Small ribosomal subunit protein uS17 (84 aa).

The protein belongs to the universal ribosomal protein uS17 family. Part of the 30S ribosomal subunit.

Functionally, one of the primary rRNA binding proteins, it binds specifically to the 5'-end of 16S ribosomal RNA. The chain is Small ribosomal subunit protein uS17 from Thermoanaerobacter pseudethanolicus (strain ATCC 33223 / 39E) (Clostridium thermohydrosulfuricum).